The chain runs to 475 residues: Ribulose bisphosphate carboxylase large chain (475 aa).

The propeptide occupies 1–2 (MA). Residue proline 3 is modified to N-acetylproline. Asparagine 123 and threonine 173 together coordinate substrate. Residue lysine 175 is the Proton acceptor of the active site. Position 177 (lysine 177) interacts with substrate. Residues lysine 201, aspartate 203, and glutamate 204 each contribute to the Mg(2+) site. Lysine 201 bears the N6-carboxylysine mark. The Proton acceptor role is filled by histidine 294. Arginine 295, histidine 327, and serine 379 together coordinate substrate.

This sequence belongs to the RuBisCO large chain family. Type I subfamily. In terms of assembly, heterohexadecamer of 8 large chains and 8 small chains. The cofactor is Mg(2+).

Its subcellular location is the plastid. The protein resides in the chloroplast. It carries out the reaction 2 (2R)-3-phosphoglycerate + 2 H(+) = D-ribulose 1,5-bisphosphate + CO2 + H2O. The enzyme catalyses D-ribulose 1,5-bisphosphate + O2 = 2-phosphoglycolate + (2R)-3-phosphoglycerate + 2 H(+). Functionally, ruBisCO catalyzes two reactions: the carboxylation of D-ribulose 1,5-bisphosphate, the primary event in carbon dioxide fixation, as well as the oxidative fragmentation of the pentose substrate in the photorespiration process. Both reactions occur simultaneously and in competition at the same active site. The protein is Ribulose bisphosphate carboxylase large chain of Ostreococcus tauri.